The following is a 327-amino-acid chain: Malate dehydrogenase (327 aa).

An NAD(+)-binding site is contributed by 12–18 (GAAGQIA). Residues arginine 93 and arginine 99 each contribute to the substrate site. Residues asparagine 106, glutamine 113, and 130 to 132 (VGN) each bind NAD(+). The substrate site is built by asparagine 132 and arginine 163. Histidine 188 serves as the catalytic Proton acceptor.

It belongs to the LDH/MDH superfamily. MDH type 2 family.

It catalyses the reaction (S)-malate + NAD(+) = oxaloacetate + NADH + H(+). Its function is as follows. Catalyzes the reversible oxidation of malate to oxaloacetate. This chain is Malate dehydrogenase, found in Burkholderia mallei (strain NCTC 10247).